A 203-amino-acid polypeptide reads, in one-letter code: Undecaprenyl phosphate transporter A (203 aa).

Transmembrane regions (helical) follow at residues 16–36 (AIFI…EIIL), 48–68 (LSIL…LLIL), 108–128 (YGVW…LITI), 137–157 (VVTF…GLIL), and 173–193 (LHTY…YFAI).

This sequence belongs to the DedA family.

The protein resides in the cell membrane. Functionally, flippase that catalyzes the transport of undecaprenyl phosphate (UndP) across the cytoplasmic membrane, from the external side to the cytoplasmic side. Is involved in UndP recycling during peptidoglycan synthesis. The polypeptide is Undecaprenyl phosphate transporter A (Staphylococcus aureus (strain NCTC 8325 / PS 47)).